The primary structure comprises 411 residues: MSEDSRRVEDDDRGPGAAYQAFLMMEDLLDKLKLLSYEDEVLRKQNMKPLSRHYFALPTNPGEQFYMFCTLAAWLISKAGHHFDQPQEYDDPNATISNILSELRSFGYSVDFPPSRLKAGYGEQVCYVLDCFAEEVLKHIHFSWKRPTYPTEEQDEENVIEDDAELTLNKIEDEIAEEDSDNDQEHFIDLNALSAQTQKLNTKESSKPEEILESNTDAAEWILEVERVLPQLKVTIRTDNKDWRVHVDQMHQHRDGIDTSLKETKGYLDKLHNEVAKALEKVSSREKYINNQLEQLVQEYRSVQAQLSEAKERYQQASGGVTERTRILAEITEELEKVKQEMEEKGSSMTDGAPLVKIKQALTKLKHEIVQMDIRTGVVEHTLLQSTLKEKSNMTRDMHALNIPESSIGAY.

Coiled coils occupy residues 161–185 (EDDAELTLNKIEDEIAEEDSDNDQE) and 261–351 (LKET…SMTD). The pDED stretch occupies residues 317–408 (ASGGVTERTR…HALNIPESSI (92 aa)).

It belongs to the IFT57 family.

It localises to the cytoplasm. It is found in the cytoskeleton. The protein localises to the cilium basal body. Its function is as follows. Required for the formation of cilia. May also have pro-apoptotic function. The sequence is that of Intraflagellar transport protein 57 homolog (ift57) from Xenopus tropicalis (Western clawed frog).